A 229-amino-acid polypeptide reads, in one-letter code: LexA repressor (229 aa).

Residues 26–46 (FDEMKEALDLASKSGIHRLIT) constitute a DNA-binding region (H-T-H motif). Catalysis depends on for autocatalytic cleavage activity residues Ser149 and Lys187.

This sequence belongs to the peptidase S24 family. Homodimer.

The catalysed reaction is Hydrolysis of Ala-|-Gly bond in repressor LexA.. Its function is as follows. Represses a number of genes involved in the response to DNA damage (SOS response), including recA and lexA. In the presence of single-stranded DNA, RecA interacts with LexA causing an autocatalytic cleavage which disrupts the DNA-binding part of LexA, leading to derepression of the SOS regulon and eventually DNA repair. In Phenylobacterium zucineum (strain HLK1), this protein is LexA repressor.